The primary structure comprises 100 residues: Large ribosomal subunit protein uL23 (100 aa).

It belongs to the universal ribosomal protein uL23 family. Part of the 50S ribosomal subunit. Contacts protein L29, and trigger factor when it is bound to the ribosome.

In terms of biological role, one of the early assembly proteins it binds 23S rRNA. One of the proteins that surrounds the polypeptide exit tunnel on the outside of the ribosome. Forms the main docking site for trigger factor binding to the ribosome. The sequence is that of Large ribosomal subunit protein uL23 from Mycobacterium marinum (strain ATCC BAA-535 / M).